We begin with the raw amino-acid sequence, 334 residues long: Glycerol-3-phosphate dehydrogenase [NAD(P)+] (334 aa).

Residues W13, R33, and K106 each coordinate NADPH. Sn-glycerol 3-phosphate is bound by residues K106, G137, and S139. A141 contributes to the NADPH binding site. Positions 192, 245, 255, 256, and 257 each coordinate sn-glycerol 3-phosphate. The active-site Proton acceptor is the K192. Position 256 (R256) interacts with NADPH. The NADPH site is built by V280 and E282.

Belongs to the NAD-dependent glycerol-3-phosphate dehydrogenase family.

Its subcellular location is the cytoplasm. The catalysed reaction is sn-glycerol 3-phosphate + NAD(+) = dihydroxyacetone phosphate + NADH + H(+). The enzyme catalyses sn-glycerol 3-phosphate + NADP(+) = dihydroxyacetone phosphate + NADPH + H(+). The protein operates within membrane lipid metabolism; glycerophospholipid metabolism. Its function is as follows. Catalyzes the reduction of the glycolytic intermediate dihydroxyacetone phosphate (DHAP) to sn-glycerol 3-phosphate (G3P), the key precursor for phospholipid synthesis. This chain is Glycerol-3-phosphate dehydrogenase [NAD(P)+], found in Chlamydia felis (strain Fe/C-56) (Chlamydophila felis).